The following is a 34-amino-acid chain: Trypsin inhibitor (34 aa).

Cystine bridges form between C7/C29 and C11/C25.

Its subcellular location is the secreted. Functionally, inhibits trypsin. This Veronica hederifolia (Ivy-leaved speedwell) protein is Trypsin inhibitor.